We begin with the raw amino-acid sequence, 165 residues long: 5-formyltetrahydrofolate cyclo-ligase (165 aa).

Position 4-8 (4-8) interacts with ATP; the sequence is KNSLR. Residues Ile-51 and Glu-56 each contribute to the substrate site. 116–124 is a binding site for ATP; it reads RIGFGKGYY. Asp-125 is a Mg(2+) binding site. ATP is bound by residues Arg-126 and Trp-154. Asp-155 contacts Mg(2+).

It belongs to the 5-formyltetrahydrofolate cyclo-ligase family. In terms of assembly, monomer or homodimer. It depends on Mg(2+) as a cofactor.

It localises to the cytoplasm. The enzyme catalyses (6S)-5-formyl-5,6,7,8-tetrahydrofolate + ATP = (6R)-5,10-methenyltetrahydrofolate + ADP + phosphate. Functionally, involved in folate metabolism. Catalyzes the irreversible conversion of 5-formyltetrahydrofolate (5-FTHF) to yield 5,10-methenyltetrahydrofolate. This chain is 5-formyltetrahydrofolate cyclo-ligase, found in Mycoplasma genitalium (strain ATCC 33530 / DSM 19775 / NCTC 10195 / G37) (Mycoplasmoides genitalium).